Reading from the N-terminus, the 387-residue chain is Limonene 1,2-monooxygenase (387 aa).

It belongs to the bacterial luciferase oxidoreductase family. Requires FAD as cofactor.

It carries out the reaction (4S)-limonene + NADPH + O2 + H(+) = limonene 1,2-epoxide + NADP(+) + H2O. The enzyme catalyses (4S)-limonene + NADH + O2 + H(+) = limonene 1,2-epoxide + NAD(+) + H2O. The catalysed reaction is (4R)-limonene + NADH + O2 + H(+) = limonene 1,2-epoxide + NAD(+) + H2O. It catalyses the reaction (4R)-limonene + NADPH + O2 + H(+) = limonene 1,2-epoxide + NADP(+) + H2O. It functions in the pathway terpene metabolism; (4R)-limonene degradation; (1S,4R)-1-hydroxylimonen-2-one from (4R)-limonene: step 1/3. Its function is as follows. Acts on both enantiomers of limonene by their NAD-dependent epoxidation at the 1,2 double bond forming limonene-1,2-epoxide. This Rhodococcus erythropolis (Arthrobacter picolinophilus) protein is Limonene 1,2-monooxygenase (limB).